The following is a 65-amino-acid chain: Large ribosomal subunit protein bL31 (65 aa).

Residues Cys16, Cys18, Cys36, and Cys39 each coordinate Zn(2+).

This sequence belongs to the bacterial ribosomal protein bL31 family. Type A subfamily. Part of the 50S ribosomal subunit. Requires Zn(2+) as cofactor.

In terms of biological role, binds the 23S rRNA. The sequence is that of Large ribosomal subunit protein bL31 from Alkaliphilus metalliredigens (strain QYMF).